The following is a 238-amino-acid chain: LexA repressor (238 aa).

The H-T-H motif DNA-binding region spans 26–46; the sequence is FDEMKDALDLASKSGIHRLIT. Residues Ser158 and Lys196 each act as for autocatalytic cleavage activity in the active site.

Belongs to the peptidase S24 family. In terms of assembly, homodimer.

It carries out the reaction Hydrolysis of Ala-|-Gly bond in repressor LexA.. Its function is as follows. Represses a number of genes involved in the response to DNA damage (SOS response), including recA and lexA. In the presence of single-stranded DNA, RecA interacts with LexA causing an autocatalytic cleavage which disrupts the DNA-binding part of LexA, leading to derepression of the SOS regulon and eventually DNA repair. This Rhizobium meliloti (strain 1021) (Ensifer meliloti) protein is LexA repressor.